Here is a 156-residue protein sequence, read N- to C-terminus: Ribosomal RNA large subunit methyltransferase H (156 aa).

S-adenosyl-L-methionine-binding positions include Leu-72, Gly-104, and 123–128 (LGPMTF).

Belongs to the RNA methyltransferase RlmH family. Homodimer.

Its subcellular location is the cytoplasm. It catalyses the reaction pseudouridine(1915) in 23S rRNA + S-adenosyl-L-methionine = N(3)-methylpseudouridine(1915) in 23S rRNA + S-adenosyl-L-homocysteine + H(+). Specifically methylates the pseudouridine at position 1915 (m3Psi1915) in 23S rRNA. In Nitratidesulfovibrio vulgaris (strain ATCC 29579 / DSM 644 / CCUG 34227 / NCIMB 8303 / VKM B-1760 / Hildenborough) (Desulfovibrio vulgaris), this protein is Ribosomal RNA large subunit methyltransferase H.